The sequence spans 505 residues: Proton-coupled zinc antiporter SLC30A1 (505 aa).

Residues 1 to 10 lie on the Cytoplasmic side of the membrane; sequence MGCWGRNRGR. A helical transmembrane segment spans residues 11–31; the sequence is LLCMLALTFMFMVLEVVVSRV. At 32-35 the chain is on the extracellular side; the sequence is TSSL. Residues 36–56 form a helical membrane-spanning segment; the sequence is AMLSDSFHMLSDVLALVVALV. Positions 43 and 47 each coordinate Zn(2+). At 57-80 the chain is on the cytoplasmic side; the sequence is AERFARRTHATQKNTFGWIRAEVM. A helical membrane pass occupies residues 81–101; that stretch reads GALVNAIFLTGLCFAILLEAI. Residues 102 to 113 are Extracellular-facing; the sequence is ERFVEPHEMQQP. A helical transmembrane segment spans residues 114-134; that stretch reads LVVLGVGVAGLLVNVLGLCLF. The Cytoplasmic portion of the chain corresponds to 135–246; that stretch reads HHHSGFSQDS…RAGQLNMRGV (112 aa). The interval 142–215 is disordered; the sequence is QDSGHSHSHG…DPEKPRSGDT (74 aa). The segment covering 187-199 has biased composition (polar residues); that stretch reads TNTLVANTSNSNG. A compositionally biased stretch (basic and acidic residues) spans 203 to 214; that stretch reads DPADPEKPRSGD. The helical transmembrane segment at 247 to 267 threads the bilayer; that stretch reads FLHVLGDALGSVIVVVNALVF. Residues His-249 and Asp-253 each coordinate Zn(2+). Over 268–306 the chain is Extracellular; sequence YFSWKGCSEGDFCVNPCFPDPCKAFVEIINSTHASVYEA. Asn-297 is a glycosylation site (N-linked (GlcNAc...) asparagine). The chain crosses the membrane as a helical span at residues 307-327; that stretch reads GPCWVLYLDPTLCVVMVCILL. The Cytoplasmic portion of the chain corresponds to 328-505; that stretch reads YTTYPLLKES…MPNKQPESSL (178 aa). The residue at position 504 (Ser-504) is a Phosphoserine.

The protein belongs to the cation diffusion facilitator (CDF) transporter (TC 2.A.4) family. SLC30A subfamily. Homodimer. Interacts with TMEM163. Interacts and forms a complex with TMC6 and TMC8; the interaction regulates zinc transport into the ER.

It is found in the cell membrane. It localises to the basolateral cell membrane. The protein localises to the cytoplasmic vesicle membrane. The protein resides in the cytoplasm. Its subcellular location is the endoplasmic reticulum membrane. It is found in the golgi apparatus membrane. It localises to the nucleus membrane. It carries out the reaction Zn(2+)(in) + 2 H(+)(out) = Zn(2+)(out) + 2 H(+)(in). Zinc ion:proton antiporter that could function at the plasma membrane mediating zinc efflux from cells against its electrochemical gradient protecting them from intracellular zinc accumulation and toxicity. Alternatively, could prevent the transport to the plasma membrane of CACNB2, the L-type calcium channels regulatory subunit, through a yet to be defined mechanism. By modulating the expression of these channels at the plasma membrane, could prevent calcium and zinc influx into cells. By the same mechanism, could also prevent L-type calcium channels-mediated heavy metal influx into cells. In some cells, could also function as a zinc ion:proton antiporter mediating zinc entry into the lumen of cytoplasmic vesicles. In macrophages, can increase zinc ions concentration into the lumen of cytoplasmic vesicles containing engulfed bacteria and could help inactivate them. Forms a complex with TMC6/EVER1 and TMC8/EVER2 at the ER membrane of keratynocytes which facilitates zinc uptake into the ER. Down-regulates the activity of transcription factors induced by zinc and cytokines. This is Proton-coupled zinc antiporter SLC30A1 from Macaca fascicularis (Crab-eating macaque).